A 604-amino-acid polypeptide reads, in one-letter code: Threonine--tRNA ligase (604 aa).

The catalytic stretch occupies residues 209–500 (DHRKLGQEMG…LTEHFGGEFP (292 aa)). Zn(2+)-binding residues include C301, H352, and H477.

This sequence belongs to the class-II aminoacyl-tRNA synthetase family. In terms of assembly, homodimer. It depends on Zn(2+) as a cofactor.

The protein resides in the cytoplasm. It carries out the reaction tRNA(Thr) + L-threonine + ATP = L-threonyl-tRNA(Thr) + AMP + diphosphate + H(+). Its function is as follows. Catalyzes the attachment of threonine to tRNA(Thr) in a two-step reaction: L-threonine is first activated by ATP to form Thr-AMP and then transferred to the acceptor end of tRNA(Thr). Also edits incorrectly charged L-seryl-tRNA(Thr). This is Threonine--tRNA ligase from Helicobacter hepaticus (strain ATCC 51449 / 3B1).